A 164-amino-acid chain; its full sequence is ATP synthase subunit b (164 aa).

The chain crosses the membrane as a helical span at residues 5-25 (IGELIGNFILVAGSFLLLIVL).

It belongs to the ATPase B chain family. F-type ATPases have 2 components, F(1) - the catalytic core - and F(0) - the membrane proton channel. F(1) has five subunits: alpha(3), beta(3), gamma(1), delta(1), epsilon(1). F(0) has three main subunits: a(1), b(2) and c(10-14). The alpha and beta chains form an alternating ring which encloses part of the gamma chain. F(1) is attached to F(0) by a central stalk formed by the gamma and epsilon chains, while a peripheral stalk is formed by the delta and b chains.

The protein resides in the cell membrane. In terms of biological role, f(1)F(0) ATP synthase produces ATP from ADP in the presence of a proton or sodium gradient. F-type ATPases consist of two structural domains, F(1) containing the extramembraneous catalytic core and F(0) containing the membrane proton channel, linked together by a central stalk and a peripheral stalk. During catalysis, ATP synthesis in the catalytic domain of F(1) is coupled via a rotary mechanism of the central stalk subunits to proton translocation. Component of the F(0) channel, it forms part of the peripheral stalk, linking F(1) to F(0). The sequence is that of ATP synthase subunit b from Streptococcus gordonii (strain Challis / ATCC 35105 / BCRC 15272 / CH1 / DL1 / V288).